The primary structure comprises 553 residues: Putative transport protein YidE (553 aa).

5 helical membrane passes run 4 to 24, 28 to 48, 65 to 85, 95 to 115, and 158 to 178; these read IALT…IGNI, GVGF…HFVD, FGLI…FFAS, LFAV…HKIF, and MSYA…MWLM. 2 RCK C-terminal domains span residues 192–276 and 279–361; these read KHES…VIGK and DTSL…VVGN. A run of 5 helical transmembrane segments spans residues 371-391, 403-425, 437-457, 464-484, and 533-553; these read MLPV…PLFV, AGGP…LYWF, LGIV…FVNT, LSWI…VGLL, and LVMF…WGIG.

It belongs to the AAE transporter (TC 2.A.81) family. YidE subfamily.

It localises to the cell membrane. In Salmonella arizonae (strain ATCC BAA-731 / CDC346-86 / RSK2980), this protein is Putative transport protein YidE.